A 397-amino-acid polypeptide reads, in one-letter code: Izumo sperm-egg fusion protein 1 (397 aa).

An N-terminal signal peptide occupies residues 1 to 21 (MGPHFTLLLAALANCLCPGRP). Intrachain disulfides connect C22/C149, C25/C152, C135/C159, C139/C165, and C182/C233. The Extracellular portion of the chain corresponds to 22–319 (CIKCDQFVTD…QNPEKKMKTR (298 aa)). The important for interaction with IZUMO1R stretch occupies residues 148 to 160 (WCLKCEKQLHICR). The 85-residue stretch at 167–251 (ERHIEVHRSE…HATVIRYDVT (85 aa)) folds into the Ig-like C2-type domain. N-linked (GlcNAc...) asparagine glycosylation is present at N204. Residues 271–292 (EHETPVHVTPQTPPGQEPESEL) form a disordered region. Residues 320 to 340 (LLILLTLGFVVLVASIIISVL) form a helical membrane-spanning segment. Residues 341-397 (HFRKVSAKLKNASDEVKPTASGSKSDQSLSQQMGLKKASQADFNSDYSGDKSEATEN) are Cytoplasmic-facing. Residues 351–397 (NASDEVKPTASGSKSDQSLSQQMGLKKASQADFNSDYSGDKSEATEN) are disordered. The segment covering 360–373 (ASGSKSDQSLSQQM) has biased composition (polar residues). S379 is subject to Phosphoserine. Residues 388-397 (SGDKSEATEN) are compositionally biased toward basic and acidic residues.

It belongs to the Izumo family. As to quaternary structure, monomer, homodimer; disulfide-linked and homooligomer; depending on the context. Interacts with IZUMO1R/JUNO. IZUMO1 and IZUMO1R/JUNO form a complex with 1:1 stoichiometry. In gamete recognition, IZUMO1R/JUNO first binds to monomeric IZUMO1. The weak, but specific interaction with IZUMO1R/JUNO induces IZUMO1 homodimerization. The process follows a tight binding phase where IZUMO1 bends the entire structure towards the sperm membrane side through a thiol-disulfide exchange reaction. The molecule no longer binds to IZUMO1R/JUNO and instead binds to a putative second oocyte receptor. Interacts with ACE3. Part of a oolemmal binding multimeric complex (IZUMO1 complex) composed at least of IZUMO1 and GLIPR1L1; the complex assemblage is influenced by the maturation status of the male germ cell. Interacts with GLIPR1L1. Interacts with FREY; the interaction retains IZUMO1 at the endoplasmic reticulum membrane and coordinates IZUMO1 complex assembly. Interacts with WDR54. Forms a complex with SPACA6 and TMEM81 on spermatocyte cell membrane. Post-translationally, N-glycosylated. Glycosylation is not essential for fusion and for proper protein trafficking in sperm. Phosphorylated. The cytoplasmic C-terminus is phosphorylated and undergoes phosphorylation changes during epididymal transit. Sperm-specific (at protein level). Detectable on sperm surface only after the acrosome reaction. Expressed in spermatozoa, more abundantly expressed in the head than the tail (at protein level).

Its subcellular location is the cell membrane. It is found in the cytoplasmic vesicle. It localises to the secretory vesicle. The protein resides in the acrosome membrane. In terms of biological role, essential sperm cell-surface protein required for fertilization by acting as a ligand for IZUMO1R/JUNO receptor on egg. The IZUMO1:IZUMO1R/JUNO interaction is a necessary adhesion event between sperm and egg that is required for fertilization but is not sufficient for cell fusion. The ligand-receptor interaction probably does not act as a membrane 'fusogen'. Plays a critical role in sperm-oolemma binding prior to plasma membrane fusion. Can mediate cell-cell fusion in cultured mammalian cells independently of its binding to IZUMO1R/JUNO. This Mus musculus (Mouse) protein is Izumo sperm-egg fusion protein 1.